Consider the following 393-residue polypeptide: Elongation factor Tu (393 aa).

Residues 10 to 202 form the tr-type G domain; it reads KPHVNIGTIG…AVDEYIPTPE (193 aa). A G1 region spans residues 19-26; sequence GHVDHGKT. Residue 19–26 participates in GTP binding; the sequence is GHVDHGKT. Threonine 26 contacts Mg(2+). Residues 60 to 64 form a G2 region; that stretch reads GITIN. The segment at 81 to 84 is G3; sequence DCPG. GTP contacts are provided by residues 81–85 and 136–139; these read DCPGH and NKAD. Residues 136–139 are G4; it reads NKAD. The interval 174–176 is G5; the sequence is SAL.

The protein belongs to the TRAFAC class translation factor GTPase superfamily. Classic translation factor GTPase family. EF-Tu/EF-1A subfamily. Monomer.

The protein localises to the cytoplasm. It carries out the reaction GTP + H2O = GDP + phosphate + H(+). Its function is as follows. GTP hydrolase that promotes the GTP-dependent binding of aminoacyl-tRNA to the A-site of ribosomes during protein biosynthesis. This is Elongation factor Tu from Clostridium novyi (strain NT).